The sequence spans 75 residues: MKTVFLLLIRFYQKWISPALPPTCRFYPTCSNYGLEAIEKHGAFKGGWLTIKRILKCHPFHPGGIDPVPEKKQKD.

This sequence belongs to the UPF0161 family.

Its subcellular location is the cell membrane. Could be involved in insertion of integral membrane proteins into the membrane. In Bacillus licheniformis (strain ATCC 14580 / DSM 13 / JCM 2505 / CCUG 7422 / NBRC 12200 / NCIMB 9375 / NCTC 10341 / NRRL NRS-1264 / Gibson 46), this protein is Putative membrane protein insertion efficiency factor 2.